A 458-amino-acid chain; its full sequence is Secretion-regulating guanine nucleotide exchange factor (458 aa).

RCC1 repeat units lie at residues 15-67 (AALF…VTDG), 68-119 (GDLF…LTEN), 120-171 (GQVL…ATAS), 172-230 (GIVF…LTDA), 231-283 (GEVY…QTET), 284-351 (GKMF…IIGG), and 352-402 (VCYS…LCQL). Residues 420–458 (DAIEDTESQKAMDKERNWKERQSETSTQSQSDWSRNGGL) are disordered. Over residues 426 to 442 (ESQKAMDKERNWKERQS) the composition is skewed to basic and acidic residues. A Phosphoserine modification is found at Ser427.

Interacts with SEC5. The interaction occurs only in the presence of magnesium or manganese and is stimulated by dCTP or GTP.

It is found in the cytoplasm. The protein resides in the nucleus. Functionally, probable guanine nucleotide exchange factor (GEF), which may be involved in the secretion process. This Homo sapiens (Human) protein is Secretion-regulating guanine nucleotide exchange factor (SERGEF).